The chain runs to 237 residues: Purine nucleoside phosphorylase DeoD-type (237 aa).

A purine D-ribonucleoside is bound at residue His-4. Phosphate is bound by residues Gly-20, Arg-24, Arg-43, and 87 to 90 (RVGT). A purine D-ribonucleoside is bound by residues 179–181 (EME) and 203–204 (SD). Asp-204 functions as the Proton donor in the catalytic mechanism.

This sequence belongs to the PNP/UDP phosphorylase family. As to quaternary structure, homohexamer; trimer of homodimers.

It carries out the reaction a purine D-ribonucleoside + phosphate = a purine nucleobase + alpha-D-ribose 1-phosphate. The enzyme catalyses a purine 2'-deoxy-D-ribonucleoside + phosphate = a purine nucleobase + 2-deoxy-alpha-D-ribose 1-phosphate. In terms of biological role, catalyzes the reversible phosphorolytic breakdown of the N-glycosidic bond in the beta-(deoxy)ribonucleoside molecules, with the formation of the corresponding free purine bases and pentose-1-phosphate. The chain is Purine nucleoside phosphorylase DeoD-type from Streptococcus pyogenes serotype M12 (strain MGAS2096).